A 469-amino-acid polypeptide reads, in one-letter code: Tetratricopeptide repeat protein 38 (469 aa).

Ala-2 is modified (N-acetylalanine). The residue at position 5 (Ser-5) is a Phosphoserine. TPR repeat units follow at residues 108–141 (REQLHVSAVETFANGNFPKACELWEQILQDHPTD), 180–213 (SYVKGIYSFGLMETNFYDQAEKLAKEALSINPTD), and 252–285 (CHNYWHWALYLIEKGEYEAALTIYDTHILPSLQA).

It belongs to the TTC38 family.

This chain is Tetratricopeptide repeat protein 38 (TTC38), found in Homo sapiens (Human).